Here is a 460-residue protein sequence, read N- to C-terminus: MKTIAIVGRPNVGKSLLFNRLCGKEISLVYDQPGVTRDRIVCCIKKEGKEIVLVDTGGLVFDCQTDLAKSLFDQISMAVEEAHHILFVVDGRTGLLPLDKQIAKFLREKHKAVTVVVNKLDHPGMEHFCAEFANLGFEEIFAVSAAHNLGINQLLEKIFSLGAEERENPIFAPSTRIAVIGQPNAGKSSLINSLIGESRLVVHEEPGTTHDAVEVGIEVCGVPFTFIDTAGLKKKNKLQEGLEIKVSGRTVHSINRSHLVWFIIDGQKGITLQDKKIGGLIQKAFKPCMVILNKIDLLEDRLNLKEGNKKGMLYVQEQLPFLSYAPVVVVSAEKKWNFKTLLSTLLRVDQERKKRIPTHRLTQFFQETLNQYPPPQVQGKRLKIYYATQIYDKEGSGGSPCPTFILFVNNPNCIKETYQKFLEKQFRQAFCFRGCPLLWKWRKAEGKGESSLHQDVILSR.

EngA-type G domains lie at 2 to 166 (KTIA…AEER) and 175 to 353 (TRIA…QERK). Residues 8-15 (GRPNVGKS), 55-59 (DTGGL), 118-121 (NKLD), 181-188 (GQPNAGKS), 228-232 (DTAGL), and 293-296 (NKID) each bind GTP. The KH-like domain occupies 354–446 (KRIPTHRLTQ…LLWKWRKAEG (93 aa)).

The protein belongs to the TRAFAC class TrmE-Era-EngA-EngB-Septin-like GTPase superfamily. EngA (Der) GTPase family. As to quaternary structure, associates with the 50S ribosomal subunit.

In terms of biological role, GTPase that plays an essential role in the late steps of ribosome biogenesis. This chain is GTPase Der, found in Methylacidiphilum infernorum (isolate V4) (Methylokorus infernorum (strain V4)).